A 202-amino-acid chain; its full sequence is Small ribosomal subunit protein uS4c (202 aa).

Positions 90-153 constitute an S4 RNA-binding domain; the sequence is MRLDNIIFRL…KSEAIISKNI (64 aa).

Belongs to the universal ribosomal protein uS4 family. As to quaternary structure, part of the 30S ribosomal subunit. Contacts protein S5. The interaction surface between S4 and S5 is involved in control of translational fidelity.

It localises to the plastid. Its subcellular location is the chloroplast. Its function is as follows. One of the primary rRNA binding proteins, it binds directly to 16S rRNA where it nucleates assembly of the body of the 30S subunit. In terms of biological role, with S5 and S12 plays an important role in translational accuracy. The chain is Small ribosomal subunit protein uS4c (rps4) from Hookeria lucens (Moss).